We begin with the raw amino-acid sequence, 365 residues long: Aminomethyltransferase (365 aa).

The protein belongs to the GcvT family. As to quaternary structure, the glycine cleavage system is composed of four proteins: P, T, L and H.

The catalysed reaction is N(6)-[(R)-S(8)-aminomethyldihydrolipoyl]-L-lysyl-[protein] + (6S)-5,6,7,8-tetrahydrofolate = N(6)-[(R)-dihydrolipoyl]-L-lysyl-[protein] + (6R)-5,10-methylene-5,6,7,8-tetrahydrofolate + NH4(+). Functionally, the glycine cleavage system catalyzes the degradation of glycine. The chain is Aminomethyltransferase from Geobacillus thermodenitrificans (strain NG80-2).